The primary structure comprises 312 residues: Ribose-phosphate pyrophosphokinase (312 aa).

ATP contacts are provided by residues 34 to 36 (DQE) and 93 to 94 (RQ). His-127 and Asp-167 together coordinate Mg(2+). Residue Lys-191 is part of the active site. D-ribose 5-phosphate-binding positions include Arg-193, Asp-217, and 221-225 (DSGGT).

It belongs to the ribose-phosphate pyrophosphokinase family. Class I subfamily. Homohexamer. Mg(2+) serves as cofactor.

Its subcellular location is the cytoplasm. The catalysed reaction is D-ribose 5-phosphate + ATP = 5-phospho-alpha-D-ribose 1-diphosphate + AMP + H(+). Its pathway is metabolic intermediate biosynthesis; 5-phospho-alpha-D-ribose 1-diphosphate biosynthesis; 5-phospho-alpha-D-ribose 1-diphosphate from D-ribose 5-phosphate (route I): step 1/1. In terms of biological role, involved in the biosynthesis of the central metabolite phospho-alpha-D-ribosyl-1-pyrophosphate (PRPP) via the transfer of pyrophosphoryl group from ATP to 1-hydroxyl of ribose-5-phosphate (Rib-5-P). This chain is Ribose-phosphate pyrophosphokinase, found in Hyphomonas neptunium (strain ATCC 15444).